A 532-amino-acid chain; its full sequence is MAFAISKRNATLFLVTLLLISVPLSSSTLQQDFVKCLVDNSDVSFPITASFFSPDQNATLFKEELESTAQNLRYLTPSNPKPVFIFEPLYETHVQAAVVCAKKLQLHLRLRSGGHDYEGLSFVAEDETPFVIVDLSKLRQVDVDLDSNSAWAHAGATIGEVYYRIQEKSQTHGFPAGLCSSLGIGGHLVGGAYGSMMRKFGLGADNVLDARIVDANGQILDRAAMGEDVFWAIRGGGGGSFGVILAWKIKLVPVPATVTVFTVTKTLEQDGTKVLYKWEQIADKLDDDLFIRVIISPASKTTKPGNRTISMSYQAQFLGDSNRLLQVMQKSFPELGLTKKDCTEMSWIKSVMYIAGFPNSAAPEALLAGKSLFKNHFKAKSDFVKEPIPVEGLEGLWERFLEEDSPLTIWNPYGGMMSRISESEIPFPHRNGTLFKIQWLSTWQDGKVSEERHMKWIREMYSYMEQYVSKNPRQAYVNYRDLDLGTNEGETDAREWGAKYYKGNFERLVKIKGEFDPDNFFRHEQSVPTKIG.

Positions 1–27 are cleaved as a signal peptide; that stretch reads MAFAISKRNATLFLVTLLLISVPLSSS. Cysteines 36 and 100 form a disulfide. Asn57 carries N-linked (GlcNAc...) asparagine glycosylation. The FAD-binding PCMH-type domain maps to 76–254; sequence TPSNPKPVFI…LAWKIKLVPV (179 aa). A cross-link (6-(S-cysteinyl)-8alpha-(pros-histidyl)-FAD (His-Cys)) is located at residues 115-179; sequence HDYEGLSFVA…QTHGFPAGLC (65 aa). N-linked (GlcNAc...) asparagine glycans are attached at residues Asn306 and Asn431.

This sequence belongs to the oxygen-dependent FAD-linked oxidoreductase family. It depends on FAD as a cofactor. Post-translationally, the FAD cofactor is bound via a bicovalent 6-S-cysteinyl, 8alpha-N1-histidyl FAD linkage. Expressed in sepals and stamen.

Its subcellular location is the secreted. It is found in the cell wall. The catalysed reaction is (E)-4-coumaroyl alcohol + A = (E)-4-coumaraldehyde + AH2. It carries out the reaction (E)-coniferol + A = (E)-coniferaldehyde + AH2. The enzyme catalyses (E)-sinapyl alcohol + A = (E)-sinapaldehyde + AH2. It catalyses the reaction 4-O-(beta-D-glucosyl)-(E)-coniferol + A = 4-O-(beta-D-glucosyl)-4-(E)-coniferyl aldehyde + AH2. Its function is as follows. Required for endosperm development and polar nuclei fusion. Mediates oxidation of p-hydroxylated derivatives of cinnamyl alcohol (i.e. the monolignols p-coumaryl-, coniferyl-, and sinapyl alcohol) to their corresponding aldehydes. Can also use the beta-O-glycosylated form of coniferyl alcohol (coniferin) as substrate, but is much less efficient towards cinnamyl alcohol. The electron acceptor required for these reactions is not known, but does not seem to be dioxygen. The chain is Monolignol oxidoreductase AtBBE-like 15 from Arabidopsis thaliana (Mouse-ear cress).